The following is a 101-amino-acid chain: NADH-quinone oxidoreductase subunit K (101 aa).

Helical transmembrane passes span 4–24 (LAHF…GIFL), 30–50 (IVLL…FVAF), and 61–81 (VFVF…LAIL).

Belongs to the complex I subunit 4L family. As to quaternary structure, NDH-1 is composed of 14 different subunits. Subunits NuoA, H, J, K, L, M, N constitute the membrane sector of the complex.

The protein resides in the cell inner membrane. It carries out the reaction a quinone + NADH + 5 H(+)(in) = a quinol + NAD(+) + 4 H(+)(out). NDH-1 shuttles electrons from NADH, via FMN and iron-sulfur (Fe-S) centers, to quinones in the respiratory chain. The immediate electron acceptor for the enzyme in this species is believed to be ubiquinone. Couples the redox reaction to proton translocation (for every two electrons transferred, four hydrogen ions are translocated across the cytoplasmic membrane), and thus conserves the redox energy in a proton gradient. The polypeptide is NADH-quinone oxidoreductase subunit K (Cupriavidus taiwanensis (strain DSM 17343 / BCRC 17206 / CCUG 44338 / CIP 107171 / LMG 19424 / R1) (Ralstonia taiwanensis (strain LMG 19424))).